Here is a 114-residue protein sequence, read N- to C-terminus: Nucleoid-associated protein PCC7424_2224 (114 aa).

Belongs to the YbaB/EbfC family. In terms of assembly, homodimer.

The protein localises to the cytoplasm. It is found in the nucleoid. Binds to DNA and alters its conformation. May be involved in regulation of gene expression, nucleoid organization and DNA protection. In Gloeothece citriformis (strain PCC 7424) (Cyanothece sp. (strain PCC 7424)), this protein is Nucleoid-associated protein PCC7424_2224.